The sequence spans 231 residues: 5'-methylthioadenosine/S-adenosylhomocysteine nucleosidase (231 aa).

Glutamate 12 serves as the catalytic Proton acceptor. Substrate contacts are provided by residues glycine 78, methionine 153, and methionine 174–glutamate 175. Catalysis depends on aspartate 198, which acts as the Proton donor.

Belongs to the PNP/UDP phosphorylase family. MtnN subfamily.

The enzyme catalyses S-adenosyl-L-homocysteine + H2O = S-(5-deoxy-D-ribos-5-yl)-L-homocysteine + adenine. It catalyses the reaction S-methyl-5'-thioadenosine + H2O = 5-(methylsulfanyl)-D-ribose + adenine. It carries out the reaction 5'-deoxyadenosine + H2O = 5-deoxy-D-ribose + adenine. The protein operates within amino-acid biosynthesis; L-methionine biosynthesis via salvage pathway; S-methyl-5-thio-alpha-D-ribose 1-phosphate from S-methyl-5'-thioadenosine (hydrolase route): step 1/2. Catalyzes the irreversible cleavage of the glycosidic bond in both 5'-methylthioadenosine (MTA) and S-adenosylhomocysteine (SAH/AdoHcy) to adenine and the corresponding thioribose, 5'-methylthioribose and S-ribosylhomocysteine, respectively. Also cleaves 5'-deoxyadenosine, a toxic by-product of radical S-adenosylmethionine (SAM) enzymes, into 5-deoxyribose and adenine. In Bacillus licheniformis (strain ATCC 14580 / DSM 13 / JCM 2505 / CCUG 7422 / NBRC 12200 / NCIMB 9375 / NCTC 10341 / NRRL NRS-1264 / Gibson 46), this protein is 5'-methylthioadenosine/S-adenosylhomocysteine nucleosidase.